We begin with the raw amino-acid sequence, 286 residues long: Probable alpha-ketoglutarate-dependent hypophosphite dioxygenase (286 aa).

Belongs to the PhyH family.

Required for hypophosphite oxidation. This is Probable alpha-ketoglutarate-dependent hypophosphite dioxygenase (htxA) from Stutzerimonas stutzeri (Pseudomonas stutzeri).